The following is a 398-amino-acid chain: Meiotically up-regulated gene 126 protein (398 aa).

2 disordered regions span residues 30–81 and 119–260; these read EEME…QRHR and FESD…NSNS. Polar residues-rich tracts occupy residues 119–135 and 183–199; these read FESD…NFPT and VQEN…QEPQ. Residues 210 to 222 show a composition bias toward low complexity; that stretch reads QANQQETSSNQEE. The segment covering 224 to 236 has biased composition (basic and acidic residues); the sequence is SFDRQETQDDKQK. Residues 248–260 show a composition bias toward polar residues; the sequence is RNRNQATITNSNS. A run of 4 helical transmembrane segments spans residues 269-289, 305-325, 341-361, and 373-393; these read IFVI…DLIE, IFLW…YLAL, GACF…CFLI, and LEIY…GAIY.

The protein localises to the membrane. Has a role in meiosis. The sequence is that of Meiotically up-regulated gene 126 protein (mug126) from Schizosaccharomyces pombe (strain 972 / ATCC 24843) (Fission yeast).